The sequence spans 509 residues: Lysine--tRNA ligase (509 aa).

Mg(2+)-binding residues include Glu-418 and Glu-425.

This sequence belongs to the class-II aminoacyl-tRNA synthetase family. Homodimer. It depends on Mg(2+) as a cofactor.

The protein localises to the cytoplasm. It carries out the reaction tRNA(Lys) + L-lysine + ATP = L-lysyl-tRNA(Lys) + AMP + diphosphate. The sequence is that of Lysine--tRNA ligase from Acinetobacter baumannii (strain AB307-0294).